Consider the following 314-residue polypeptide: MTREVFQHSSVMPEEVLECLRPQPGEVFVDGTVGGGGHARLILEATAPDGLLVGLDRDREALEEAGRQLASFGERVLLRHGNFADATRILAELDIATVDGILLDLGVSSFQLDTARRGFSFQSDAPLDMRMDTSAGMTAADVVNALSPEELARIFREYGEERYARRIARRIEKVRADEPLMTTRQLAELVRDAVPGGHVPSRIHPATRVFQALRIHVNAELDSLREGLRRSLALLKPGGRMAVISFHSLEDRIVKQFFRSEVQTCICPPGLPICACNRKPGVALLTRKGLKASESEIAANPRARSAVLRAIRRL.

S-adenosyl-L-methionine is bound by residues 36–38, D56, F83, D104, and Q111; that span reads GGH.

The protein belongs to the methyltransferase superfamily. RsmH family.

The protein localises to the cytoplasm. The catalysed reaction is cytidine(1402) in 16S rRNA + S-adenosyl-L-methionine = N(4)-methylcytidine(1402) in 16S rRNA + S-adenosyl-L-homocysteine + H(+). Its function is as follows. Specifically methylates the N4 position of cytidine in position 1402 (C1402) of 16S rRNA. In Syntrophotalea carbinolica (strain DSM 2380 / NBRC 103641 / GraBd1) (Pelobacter carbinolicus), this protein is Ribosomal RNA small subunit methyltransferase H.